The following is a 264-amino-acid chain: DNA-directed RNA polymerase subunit Rpo3 (264 aa).

Cysteine 203, cysteine 206, and cysteine 209 together coordinate [3Fe-4S] cluster.

Belongs to the archaeal Rpo3/eukaryotic RPB3 RNA polymerase subunit family. Part of the RNA polymerase complex. [3Fe-4S] cluster is required as a cofactor.

It localises to the cytoplasm. The enzyme catalyses RNA(n) + a ribonucleoside 5'-triphosphate = RNA(n+1) + diphosphate. DNA-dependent RNA polymerase (RNAP) catalyzes the transcription of DNA into RNA using the four ribonucleoside triphosphates as substrates. This is DNA-directed RNA polymerase subunit Rpo3 from Methanothermobacter thermautotrophicus (strain ATCC 29096 / DSM 1053 / JCM 10044 / NBRC 100330 / Delta H) (Methanobacterium thermoautotrophicum).